A 312-amino-acid polypeptide reads, in one-letter code: Zinc finger protein-like 1 (312 aa).

The segment at 1 to 43 (MGLCKCPKRKVTNLFCFEHRVNVCEHCLVANHAKCIVQSYLQW) adopts a B box-type; degenerate zinc-finger fold. Residues 1 to 268 (MGLCKCPKRK…RPLTLLQRAG (268 aa)) lie on the Cytoplasmic side of the membrane. Residues 53–101 (CRLCNIPLAARETTRLICYDLFHWACLNERAAQLPRNTAPAGYQCPSCS) form an RING-type; degenerate zinc finger. A disordered region spans residues 144–233 (EPEPLNTSEF…RAPGLHRDCD (90 aa)). Residues 148-173 (LNTSEFSDWSSFNASGSPEQEETASA) are compositionally biased toward polar residues. Residues 215-233 (KVYDTRDDERAPGLHRDCD) show a composition bias toward basic and acidic residues. The helical transmembrane segment at 269–289 (LLLLLGLLGFLALLALMSRLG) threads the bilayer. Topologically, residues 290–312 (RAAADSDPNLDPLMNPHIRVGPS) are lumenal.

It belongs to the ZFPL1 family. Interacts with GOLGA2/GM130. Phosphorylated.

It localises to the golgi apparatus. Its subcellular location is the cis-Golgi network membrane. Required for cis-Golgi integrity and efficient ER to Golgi transport. Involved in the maintenance of the integrity of the cis-Golgi, possibly via its interaction with GOLGA2/GM130. The protein is Zinc finger protein-like 1 (ZFPL1) of Bos taurus (Bovine).